A 144-amino-acid polypeptide reads, in one-letter code: Kunitz-type elastase inhibitor BrEI (144 aa).

Asn38 is a glycosylation site (N-linked (GlcNAc...) asparagine). A disulfide bond links Cys41 and Cys88.

Belongs to the leguminous Kunitz-type inhibitor family.

Functionally, inhibitor of porcine pancreatic elastase with a Ki of 27 nM. Does not inhibit human neutrophil elastase, bovine trypsin, human plasma kallikrein or porcine pancreatic kallikrein. The protein is Kunitz-type elastase inhibitor BrEI of Bauhinia rufa (Orchid tree).